The primary structure comprises 184 residues: Photosystem I assembly protein Ycf4 (184 aa).

The next 2 membrane-spanning stretches (helical) occupy residues 22-42 and 57-77; these read FCWA…GTSS and IIFF…LFIS.

Belongs to the Ycf4 family.

It is found in the plastid. The protein localises to the chloroplast thylakoid membrane. In terms of biological role, seems to be required for the assembly of the photosystem I complex. The polypeptide is Photosystem I assembly protein Ycf4 (Lobularia maritima (Sweet alyssum)).